Consider the following 320-residue polypeptide: 3-ketodihydrosphingosine reductase TSC10 (320 aa).

The Cytoplasmic portion of the chain corresponds to 1-254 (MKFTLEDQVV…IIAKSLARGD (254 aa)). L11 serves as a coordination point for NADP(+). G14, S16, and G18 together coordinate NADPH. A GXSXG motif is present at residues 14-18 (GGSQG). L19 is an NADP(+) binding site. Residues R41, R45, D89, and L90 each coordinate NADPH. D89 lines the NADP(+) pocket. Catalysis depends on S166, which acts as the Proton donor. Positions 180, 184, and 213 each coordinate NADP(+). Y180 acts as the Proton acceptor in catalysis. K184 serves as the catalytic Lowers pKa of active site Tyr. A helical membrane pass occupies residues 255 to 275 (DDVFTDFVGWMIMGMDLGLTA). Over 276–279 (KKSR) the chain is Lumenal. Residues 280 to 300 (FVPLQWIFGVLSNILVVPFYM) traverse the membrane as a helical segment. Residues 301–320 (VGCSWYIRKWFRENDGKKAN) are Cytoplasmic-facing.

This sequence belongs to the short-chain dehydrogenases/reductases (SDR) family. As to quaternary structure, dimer or tetramer.

It is found in the endoplasmic reticulum membrane. It carries out the reaction sphinganine + NADP(+) = 3-oxosphinganine + NADPH + H(+). Its pathway is lipid metabolism; sphingolipid metabolism. Catalyzes the reduction of 3'-oxosphinganine (3-ketodihydrosphingosine/KDS) to sphinganine (dihydrosphingosine/DHS), the second step of de novo sphingolipid biosynthesis. The polypeptide is 3-ketodihydrosphingosine reductase TSC10 (Saccharomyces cerevisiae (strain ATCC 204508 / S288c) (Baker's yeast)).